Reading from the N-terminus, the 477-residue chain is Ribulose bisphosphate carboxylase large chain (477 aa).

Positions 1–2 (MS) are excised as a propeptide. Proline 3 bears the N-acetylproline mark. Lysine 14 is modified (N6,N6,N6-trimethyllysine). Positions 123 and 173 each coordinate substrate. Residue lysine 175 is the Proton acceptor of the active site. Lysine 177 is a binding site for substrate. Positions 201, 203, and 204 each coordinate Mg(2+). Lysine 201 bears the N6-carboxylysine mark. Histidine 294 acts as the Proton acceptor in catalysis. Residues arginine 295, histidine 327, and serine 379 each contribute to the substrate site.

This sequence belongs to the RuBisCO large chain family. Type I subfamily. Heterohexadecamer of 8 large chains and 8 small chains; disulfide-linked. The disulfide link is formed within the large subunit homodimers. Requires Mg(2+) as cofactor. The disulfide bond which can form in the large chain dimeric partners within the hexadecamer appears to be associated with oxidative stress and protein turnover.

It localises to the plastid. Its subcellular location is the chloroplast. The enzyme catalyses 2 (2R)-3-phosphoglycerate + 2 H(+) = D-ribulose 1,5-bisphosphate + CO2 + H2O. The catalysed reaction is D-ribulose 1,5-bisphosphate + O2 = 2-phosphoglycolate + (2R)-3-phosphoglycerate + 2 H(+). Functionally, ruBisCO catalyzes two reactions: the carboxylation of D-ribulose 1,5-bisphosphate, the primary event in carbon dioxide fixation, as well as the oxidative fragmentation of the pentose substrate in the photorespiration process. Both reactions occur simultaneously and in competition at the same active site. This chain is Ribulose bisphosphate carboxylase large chain, found in Hyophorbe lagenicaulis (Bottle palm).